Here is a 4423-residue protein sequence, read N- to C-terminus: MQGGPVICNGIPSVTISILPHPRSRARTSLLLRRGGALGPGSGCMSDRLFTTPDMRKNRQRLTLAASVVLKKEENEIDLEKSLVEQGGDMLSGVFFAGQCRELGLIVDIANASSMSLRDMALQLVESNPELLRPSTAMDCRSASVPHTLLQSLYRNFGASTGVTLDVDIPLTLEDVTKMLQRLVERHPILGSTAEPNDKTSYVFSNTVPSPILVSFESDKTHAEMRMLQEDSKSKVAVFSVMAFGEESRITNLSFVADNAAIDAQSWSILLHDIQAFPAGFNDLTTQSNTFPNWIESAFRVTDTTVETAGTTKLPIHSEMSAEDSSPALSSCVFTLNPELTQAIQSEACHRTLRTEVQDVMFGALASTFGTQLPASARYLEIKDGRPQDEGNAWNSVIGCFDEIFELAYECHGDIIDACRSAKDSRKQSSLSPVHYASCRYNLILDTTWLKACIGTSSTGKMRLMDNEPGRYAAEALVKSMGGLCMTPFWQGTGLSFLVVSSTDFGSDEDLKLNSEMFINHVQHISETLPNRSPWPTLSDFPHVSFDYPSLDRMFQQKLLQITQTPLADIHNIYPCTSIQENMLMGNSLDKDAYVCSFTARATTSGAFTHFDAAKWAEAWGRVVEKHSSLRTIFIESEGRPGHFEQVILKSVAAPVDIMTGPSVPSKIEFQDFSVPHHLAIIQEGPGRCLMILTMSHAITDGHSAEVLLGDLCAEAVQTDGTGEEAFAYSEFALTEYQSTNTEVSDYWQDYLLKTQETILPVTREKSDFHDFNTVHSTMPVNVSSMDRICRRHNINLASVCQFAWGVVLRSRLGVDGVCFSYISSLRNKPLKGIMTAVGPLITTLLCSMNLEGERPVLDAIRAVDSEYVESLSHEKELYNITSPRRWCNTVMSFRRRLVQDDGGIPGLSYKLVKAFSPTNYDFSLIVSAGQSDLDIMLDYWGSRMDRDNAQSLLQIFQEVLHSIFRDIDSTVSGLDLISQDDKNRILERNRLVPKGLNRCVHELVNERIQKQPSAVAIDAWDGSLTYSELDNLTSRLAQYLSNIGVGPEVPVGICMDKSKLVPVTVLAILQAGGAVLPIGVEEPEARVEAILADATPVAIVGDGRQVTRLSELGTQVLNVVDILADMSSSLPSSTSKQETRATPDTTAWIFYTSGSTGTPKGVLVEHQALATSMRAHGVALKVLPEDRVLQFAAHTFDVSLSELFTTLIFGGCVCIPDETNRVNDLAGSVHGLQANVLSLTSSMASTIRPRDVPMVRKLVLFGEEVKASVVEAWLGKADIYNAYGPTESSIFASVSKPFQSVDDLSNIGYPMDVNFWVTDPQNPGRLCPPGSPGELLIEGPLLARGYLNDDNKTSTAFIQDPSFASLLGLEKGRRFYRTGDLVRQNSDFSMSYLGRRDTQVKIRGQRLDVSEVEHWITASLEGAVRVVVDLLPGAILFAAVEFSPHAVVVVSGDKTILQTSDEFRHRFSQLKNALQGKLPSYMLPTFYVPFRRIPLTSSAKTDRKMVRLLVSQLDTIILQQYISNDSNESDDLPLTETEQKLKVLWANVLNVTHSSIGAGDHFLYRGGDSLMAIKLVEQARLESISMTVKDVLSFPRLQDLARTIDERNEVGIISSAQMANQHDPPAFSLWKPSSSDRETELADIAMQCGLGTEDIEDVYPCTSLQESMLAATQQRPTAYIVRQMYSLSDSIDLSHFRKIWDVLVQQAPVMRTHILLGQRSGSLQVLSKKPLTWYNHDDLDEYVAADQARAMATGQPLMRLALVQDKSKGVRYFVWTAHHSVYDGWSAQLIYKRLAALYLYEEVPTAVPFTRFIEYQQRTKDDSDINLGSYWRGQLGGDVPSAFPSMPSPFYQPKPVSLHRSEIDTLSFKPSKYGFSLADILRAGWAMTLGQYLGTNDVVFGAILSGRNAPVAEITQLIAPTITTVPVRVTVDREAKVSWYLAAIQSQAVEMIPYEHTGLDEIKRLCPDLQPATDVNHAFVIEPPYAKDGDAHTILPGLELVDTALDTFDTFALTIQCQLPSKQGGSIKVEARFDAKVVSDAQVTVLLRQFEHWVSQFLDETHHETQLKSLEEITSADLAQIKKQNSRIPVRDMVCLHHLIRDVAKEQPDSPAVCAWDGDFTYEELWTNARRLAQHLSNLGVGPKSRVAVCMDKSRWTVASILGILESGGVVVMLRSQSPLEQAKALVADCQATAMLVNAGHTARFAGSGPRIVEVNDALLASLPDPTVSGPICPALNPGHPAWIVYTSGSTGLPKGCLLIHGGLATSLPAHGRATRWHKESRTLQFASHEFDVTLQEIMTTLIFKGCVCIPSEDQRINSLSQAIRDMNVTQMVLTPTVASMINPVDVPCIVQLQVAGELIKPSVVERWIDHAEVVNIYGPSECSVYSSCGTPMQTIEDAPVIGYPLDNCNFWVTSTTDHNRLCPIGIPGELLIENSWQAWGYVNNPELTAQCFVVEPGFIKQLGLDGSGRRMYRTGDLVQQNPNGSYTYIGRMGSEVKFRGHRVDLGRIEYWIGKLLEGVQTIAVDLVELDTGKKANDLVAVIDFTDDCDLFDLDQTEDIDGVAILTPSTKIRKALCRLRDGLTDKLPSYMVPTAFMPWKKIPFTSSGKTNRKAIRQLLTNLEAGSSLLQRYLADGDVKEVPQTRIGKKLQQLWAEVLSVKVDSIGSQDHFTRLGGDSLAAMKLVASARQVGLELSVTSIFTYPVLEDCARILEADQDSSLVKLPEEDPAPFELMPEDWSTGGFEDRLADFAAQCRVAPSQIEDVYPCTPMQEALFAITARNPTAYTYRQVFRASGEDVDMVRFQTAWETVASILPILRTRIVLDQSGFLQTVIDQPLIWHIGGDLDSYIAADKLVGFEPGTPLLRCAIVEGGGAKYFVLTTHHSMFDKWSIEKIMYRYLIPAYFGQQLPEAVPFPRFVRHVLNIDMDSASQFWTQKLEDDEPFTEFPSLPSVGFYEPKPTGLLSQTFRIDGVNKLETPFPSLLRAAWALTVSQYAGAEDVMFAVNLSGRSAPVADISELAAPTFTTVPVRVRINRSQRVRDFLDGLHRETIAMVPFEHVGLRNIKRFVPTFNPSDLRHLFLVHTAADDTLDDPSFRLPGFEQVHQKAETLDDYPLTILCKLDDHKGEAEVVARFDSTVIPADQIQSVLRQFEHNVVQLAASASSDDQTVGGLPLVSSYDLDRISAWNVTGPPSLGCVHDLFIRSLETRPDSQAVCSWDGEFTYRELDQAARILAQLLVAEGGVGTEVAVGLCMDKSRWAMVAVLAILYAGGAVVPLGVDLPPERISVILQDSSPTMVLCDEAKADRFRSLGCKIAVVNETEIDGVAKSYDGYNPNIPSTSVSAENMAWIIYTSGSTGVPKGVTLEHGGIYNIILNKGTTLGFDSTTRTFQFAAFTFDVSIADPLMAWAFGGCVCLPSEDERMNDLVGSINRLNANFALLTASTAALITPSEVPRMTKLLLGGESNTPSLMEKWLLDSNITVGNSYGPAECSITSTINARVTDKNGCNIIGNPIQGTQAWIADFHDCNRLVPIGAVGELLIEGPHVARGYRNDAVKTMAAFITDPRFTTDVGPKRHGRRMYRSGDLVRYTSDGNIEFLGRGDSQIKIRGQRVDLGEIESCIVKLVPKVRTALVEYLHLSEDQRALIAALEFHNADKDQDVEGLATWLKESLAQQLPAYMIPRAYLQIDMIPKTVSGKTNRKAIRQFMMNKYMQIADENSLNDFQTGKVDTESEYITRTLWAAVLGVDADRIDRHDNFFDIGGDSIIAMKLVAAAKVKGFQIRVLDIFENPVLFKMAVVAQHQTEMALEAVSPPPYYPFQLLDSDDNDIDTILEEFVCPVTGTGKESIQDVFPAPDAIAFGVAGALTAAQPEVNTFVLDAEGDLDLVRLQQSCVLLAHHIEAFRTAFAFDLRSGRLLQIVLKSYQHNVLVVRTRESLEDATERLFEKDIYHEPFRLGTPLVSMTILQEHNSRNTRILLRMSHAIYDAMSLPIILRTLRSLYHKQDAYKPPLFSFAEYVADLNRHTGNTSYNYWRNLLQGSTMTEVIPTAAYGGQNPVQMAFTNAKMIAVRKSKGDGITTSTIISCAWAHVLAQYTGKPDVVFGDTISGRNLVDPSISSTVVGCCATNVPMRVRFAGDSGEHSILQLLNQVRDQQRSRIPHEGVGVRSLIHECTDWSPEARFTSVVNHRPANDPAVKSISNQIDFKVSTITTENKPFMTWYDLAVISQENNGHVEMSLGYSTTGFHPETAQSLLEDLADTVQILLNAVSSQDEKLALLGTEVMPRSSSKLTKLQRVNSPKEQTLRKDKPTNGVFSDKPDDATLSVLDTIWFSIFTSNRAGVGTLASDELTPDLRYLPFYKVGGDLLDAAWFIALIQRRVKTSGRESNGDGILASHNQLTVDDVLRHPSVVEFAGLLKQKQVELN.

Residues 572 to 986 (NIYPCTSIQE…LISQDDKNRI (415 aa)) form a condensation 1 region. The interval 1007–1404 (ERIQKQPSAV…GRRDTQVKIR (398 aa)) is adenylation 1. The Carrier 1 domain maps to 1533–1609 (LPLTETEQKL…DLARTIDERN (77 aa)). At Ser1570 the chain carries O-(pantetheine 4'-phosphoryl)serine. Residues 1657–2066 (EDVYPCTSLQ…QFLDETHHET (410 aa)) form a condensation 2 region. The interval 2102 to 2499 (RDVAKEQPDS…YIGRMGSEVK (398 aa)) is adenylation 2. A Carrier 2 domain is found at 2642–2718 (VPQTRIGKKL…DCARILEADQ (77 aa)). An O-(pantetheine 4'-phosphoryl)serine modification is found at Ser2679. The condensation 3 stretch occupies residues 2764-3170 (EDVYPCTPMQ…AASASSDDQT (407 aa)). An adenylation 3 region spans residues 3205–3609 (RSLETRPDSQ…GRGDSQIKIR (405 aa)). The region spanning 3731-3804 (TESEYITRTL…KMAVVAQHQT (74 aa)) is the Carrier 3 domain. An O-(pantetheine 4'-phosphoryl)serine modification is found at Ser3765. Residues 3875 to 4278 (TFVLDAEGDL…SQDEKLALLG (404 aa)) form a condensation 4 region. Over residues 4288–4300 (KLTKLQRVNSPKE) the composition is skewed to polar residues. Residues 4288-4312 (KLTKLQRVNSPKEQTLRKDKPTNGV) form a disordered region.

The protein belongs to the NRP synthetase family.

It functions in the pathway secondary metabolite biosynthesis. Functionally, nonribosomal peptide synthetase; part of the gene cluster that mediates the biosynthesis of the lipopeptide fusaristatin A. Fusaristatin A consists of a polyketide chain linked to three amino acid residues glutamine (Gln), dehydroalanine (dehydro-Ala), and beta-aminoisobutyric acid. The biosynthesis starts with formation of a linear polyketide chain by the highly reducing polyketide synthase PKS6. The gene cluster does not contain an acyl-CoA ligase or an acyl-transferase, and it is therefore predicted that the polyketide is transferred directly to the nonribosomal peptide synthetase NRPS7. Modules 1-3 from NRPS7 incorporate dehydro-Ala, Gln, and beta-aminoisobutyric acid in the compound, which is released by cyclization. The beta-aminoisobutyric acid units are most likely not freely available to the NRPS, but can be synthesized from thymine, which requires a dehydrogenase, a monooxygenase, and an aminotransferase. The fusaristatin A cluster contains a cytochrome P450 monooxygenase (FGSG_08207) and an aminotransferase (FGSG_17085), which theoretically can perform two of the enzymatic steps. The enzymes may however also be involved in biosynthesis of dehydroalanine or modification of the polyketide. The dehydro-Ala residue can be a result of cyclization, where serine is dehydrated. The last gene of the cluster encodes a protein with an A/B barrel domain found in variable enzymes, which hampers functional prediction. The protein is Nonribosomal peptide synthetase 7 of Gibberella zeae (strain ATCC MYA-4620 / CBS 123657 / FGSC 9075 / NRRL 31084 / PH-1) (Wheat head blight fungus).